We begin with the raw amino-acid sequence, 336 residues long: tRNA-cytidine(32) 2-sulfurtransferase (336 aa).

The disordered stretch occupies residues 1–42 (MNAPDTLTGLEANAPVTEEAPAASEAERKRAHTRREQKEQYE). The PP-loop motif motif lies at 75–80 (SGGKDS). 3 residues coordinate [4Fe-4S] cluster: cysteine 150, cysteine 153, and cysteine 241. Residues 301–328 (PHGDIAFDEEPCSADSASNQTQRPSQTV) are disordered. The span at 315–328 (DSASNQTQRPSQTV) shows a compositional bias: polar residues.

It belongs to the TtcA family. Homodimer. Mg(2+) serves as cofactor. It depends on [4Fe-4S] cluster as a cofactor.

Its subcellular location is the cytoplasm. It catalyses the reaction cytidine(32) in tRNA + S-sulfanyl-L-cysteinyl-[cysteine desulfurase] + AH2 + ATP = 2-thiocytidine(32) in tRNA + L-cysteinyl-[cysteine desulfurase] + A + AMP + diphosphate + H(+). The protein operates within tRNA modification. Catalyzes the ATP-dependent 2-thiolation of cytidine in position 32 of tRNA, to form 2-thiocytidine (s(2)C32). The sulfur atoms are provided by the cysteine/cysteine desulfurase (IscS) system. This chain is tRNA-cytidine(32) 2-sulfurtransferase, found in Paraburkholderia phymatum (strain DSM 17167 / CIP 108236 / LMG 21445 / STM815) (Burkholderia phymatum).